We begin with the raw amino-acid sequence, 1074 residues long: Insulin receptor substrate 2-A (1074 aa).

Residues 1 to 64 (MAGVLCPTEE…PPASAAEDDV (64 aa)) are disordered. Short sequence motifs (YXXM motif) lie at residues 33 to 36 (YRRM) and 145 to 148 (YFAM). A PH domain is found at 63 to 168 (DVRKRGYLRK…WYQALSELIN (106 aa)). The IRS-type PTB domain occupies 193–297 (FKEVWQVNVK…DTMKALKAYS (105 aa)). Disordered stretches follow at residues 326–370 (PPSQ…RPFR), 426–461 (CSSSGHGSASETLTRPSSSSVCGSPSDGGFISSDEY), and 475–510 (SNTPDSLGNTPPIQEENTLSDYMSMSTHSQPDSRDD). Positions 347–361 (SAKNNSFRFRTSSEG) are enriched in polar residues. 2 stretches are compositionally biased toward low complexity: residues 426–435 (CSSSGHGSAS) and 442–454 (SSSSVCGSPSDGG). Residues 475 to 504 (SNTPDSLGNTPPIQEENTLSDYMSMSTHSQ) are compositionally biased toward polar residues. 6 consecutive short sequence motifs (YXXM motif) follow at residues 496–499 (YMSM), 592–595 (YMPM), 605–608 (YLPM), 631–634 (YMMM), 663–666 (YMDM), and 710–713 (YVPM). Positions 801 to 821 (TPYSLSADGSPSSLGSSCDHR) are disordered. A compositionally biased stretch (low complexity) spans 804–817 (SLSADGSPSSLGSS). The short motif at 888-891 (YTTM) is the YXXM motif 9 element.

Phosphorylated by INSR.

Its function is as follows. Potentiates insulin signaling. The protein is Insulin receptor substrate 2-A (irs2-a) of Xenopus laevis (African clawed frog).